Reading from the N-terminus, the 504-residue chain is Histidine--tRNA ligase (504 aa).

This sequence belongs to the class-II aminoacyl-tRNA synthetase family. As to quaternary structure, homodimer.

It localises to the cytoplasm. It carries out the reaction tRNA(His) + L-histidine + ATP = L-histidyl-tRNA(His) + AMP + diphosphate + H(+). The chain is Histidine--tRNA ligase from Rhizobium rhizogenes (strain K84 / ATCC BAA-868) (Agrobacterium radiobacter).